A 513-amino-acid polypeptide reads, in one-letter code: ATP synthase subunit alpha (513 aa).

Residue 169–176 participates in ATP binding; it reads GDRQTGKT.

This sequence belongs to the ATPase alpha/beta chains family. In terms of assembly, F-type ATPases have 2 components, CF(1) - the catalytic core - and CF(0) - the membrane proton channel. CF(1) has five subunits: alpha(3), beta(3), gamma(1), delta(1), epsilon(1). CF(0) has three main subunits: a(1), b(2) and c(9-12). The alpha and beta chains form an alternating ring which encloses part of the gamma chain. CF(1) is attached to CF(0) by a central stalk formed by the gamma and epsilon chains, while a peripheral stalk is formed by the delta and b chains.

It is found in the cell inner membrane. It catalyses the reaction ATP + H2O + 4 H(+)(in) = ADP + phosphate + 5 H(+)(out). Produces ATP from ADP in the presence of a proton gradient across the membrane. The alpha chain is a regulatory subunit. This chain is ATP synthase subunit alpha, found in Nitrosomonas europaea (strain ATCC 19718 / CIP 103999 / KCTC 2705 / NBRC 14298).